The chain runs to 912 residues: Nonsense-mediated mRNA decay factor SMG8 (912 aa).

Residues 565–630 (EHSNRTPDAS…GEDEDETLEQ (66 aa)) are disordered. Residues 570–602 (TPDASTHPPMTNENSPHLSGSQKSQDSASNLTF) show a composition bias toward polar residues. Over residues 604 to 614 (MDEKRDEENKS) the composition is skewed to basic and acidic residues.

This sequence belongs to the SMG8 family.

In terms of biological role, involved in nonsense-mediated decay (NMD) of mRNAs containing premature stop codons. Probable component of kinase complex containing SMG1 and recruited to stalled ribosomes. The sequence is that of Nonsense-mediated mRNA decay factor SMG8 from Culex quinquefasciatus (Southern house mosquito).